The sequence spans 362 residues: 1-aminocyclopropane-1-carboxylate oxidase homolog 10 (362 aa).

The Fe2OG dioxygenase domain maps to K211–S310. Fe cation is bound by residues H235, D237, and H291. Position 301 (R301) interacts with 2-oxoglutarate.

Belongs to the iron/ascorbate-dependent oxidoreductase family. It depends on Fe(2+) as a cofactor.

The protein is 1-aminocyclopropane-1-carboxylate oxidase homolog 10 of Arabidopsis thaliana (Mouse-ear cress).